The primary structure comprises 420 residues: CinA-like protein (420 aa).

It belongs to the CinA family.

The chain is CinA-like protein from Syntrophus aciditrophicus (strain SB).